Here is a 255-residue protein sequence, read N- to C-terminus: 1-(5-phosphoribosyl)-5-[(5-phosphoribosylamino)methylideneamino] imidazole-4-carboxamide isomerase (255 aa).

Asp-8 functions as the Proton acceptor in the catalytic mechanism. Catalysis depends on Asp-129, which acts as the Proton donor.

The protein belongs to the HisA/HisF family.

It localises to the cytoplasm. It carries out the reaction 1-(5-phospho-beta-D-ribosyl)-5-[(5-phospho-beta-D-ribosylamino)methylideneamino]imidazole-4-carboxamide = 5-[(5-phospho-1-deoxy-D-ribulos-1-ylimino)methylamino]-1-(5-phospho-beta-D-ribosyl)imidazole-4-carboxamide. Its pathway is amino-acid biosynthesis; L-histidine biosynthesis; L-histidine from 5-phospho-alpha-D-ribose 1-diphosphate: step 4/9. The sequence is that of 1-(5-phosphoribosyl)-5-[(5-phosphoribosylamino)methylideneamino] imidazole-4-carboxamide isomerase from Prochlorococcus marinus (strain MIT 9313).